The sequence spans 456 residues: Ribosomal protein uS12 methylthiotransferase RimO (456 aa).

An MTTase N-terminal domain is found at 11 to 126 (PKVGFVSLGC…VMQAVHTHLP (116 aa)). [4Fe-4S] cluster contacts are provided by cysteine 20, cysteine 56, cysteine 85, cysteine 157, cysteine 161, and cysteine 164. Residues 143–384 (LTPKHYAYLK…MEVAEEVSAR (242 aa)) form the Radical SAM core domain. The 70-residue stretch at 387 to 456 (QRKVGQTLRV…DGHDLWGEVA (70 aa)) folds into the TRAM domain.

The protein belongs to the methylthiotransferase family. RimO subfamily. The cofactor is [4Fe-4S] cluster.

The protein resides in the cytoplasm. The catalysed reaction is L-aspartate(89)-[ribosomal protein uS12]-hydrogen + (sulfur carrier)-SH + AH2 + 2 S-adenosyl-L-methionine = 3-methylsulfanyl-L-aspartate(89)-[ribosomal protein uS12]-hydrogen + (sulfur carrier)-H + 5'-deoxyadenosine + L-methionine + A + S-adenosyl-L-homocysteine + 2 H(+). Its function is as follows. Catalyzes the methylthiolation of an aspartic acid residue of ribosomal protein uS12. This chain is Ribosomal protein uS12 methylthiotransferase RimO, found in Cupriavidus metallidurans (strain ATCC 43123 / DSM 2839 / NBRC 102507 / CH34) (Ralstonia metallidurans).